A 411-amino-acid polypeptide reads, in one-letter code: Multifunctional CCA protein (411 aa).

The ATP site is built by Gly-8 and Arg-11. CTP is bound by residues Gly-8 and Arg-11. 2 residues coordinate Mg(2+): Asp-21 and Asp-23. Positions 91, 137, and 140 each coordinate ATP. Residues Arg-91, Arg-137, and Arg-140 each contribute to the CTP site. An HD domain is found at 228-329 (CGIHTLMVAK…VNILDQIDSW (102 aa)).

The protein belongs to the tRNA nucleotidyltransferase/poly(A) polymerase family. Bacterial CCA-adding enzyme type 1 subfamily. As to quaternary structure, monomer. Can also form homodimers and oligomers. Mg(2+) serves as cofactor. The cofactor is Ni(2+).

It carries out the reaction a tRNA precursor + 2 CTP + ATP = a tRNA with a 3' CCA end + 3 diphosphate. The catalysed reaction is a tRNA with a 3' CCA end + 2 CTP + ATP = a tRNA with a 3' CCACCA end + 3 diphosphate. In terms of biological role, catalyzes the addition and repair of the essential 3'-terminal CCA sequence in tRNAs without using a nucleic acid template. Adds these three nucleotides in the order of C, C, and A to the tRNA nucleotide-73, using CTP and ATP as substrates and producing inorganic pyrophosphate. tRNA 3'-terminal CCA addition is required both for tRNA processing and repair. Also involved in tRNA surveillance by mediating tandem CCA addition to generate a CCACCA at the 3' terminus of unstable tRNAs. While stable tRNAs receive only 3'-terminal CCA, unstable tRNAs are marked with CCACCA and rapidly degraded. This is Multifunctional CCA protein from Photobacterium profundum (strain SS9).